Consider the following 183-residue polypeptide: ATP synthase subunit delta (183 aa).

Belongs to the ATPase delta chain family. In terms of assembly, F-type ATPases have 2 components, F(1) - the catalytic core - and F(0) - the membrane proton channel. F(1) has five subunits: alpha(3), beta(3), gamma(1), delta(1), epsilon(1). F(0) has three main subunits: a(1), b(2) and c(10-14). The alpha and beta chains form an alternating ring which encloses part of the gamma chain. F(1) is attached to F(0) by a central stalk formed by the gamma and epsilon chains, while a peripheral stalk is formed by the delta and b chains.

The protein resides in the cell inner membrane. In terms of biological role, f(1)F(0) ATP synthase produces ATP from ADP in the presence of a proton or sodium gradient. F-type ATPases consist of two structural domains, F(1) containing the extramembraneous catalytic core and F(0) containing the membrane proton channel, linked together by a central stalk and a peripheral stalk. During catalysis, ATP synthesis in the catalytic domain of F(1) is coupled via a rotary mechanism of the central stalk subunits to proton translocation. Its function is as follows. This protein is part of the stalk that links CF(0) to CF(1). It either transmits conformational changes from CF(0) to CF(1) or is implicated in proton conduction. The chain is ATP synthase subunit delta from Ehrlichia canis (strain Jake).